Reading from the N-terminus, the 357-residue chain is 4-hydroxy-3-methylbut-2-en-1-yl diphosphate synthase (flavodoxin) (357 aa).

4 residues coordinate [4Fe-4S] cluster: cysteine 264, cysteine 267, cysteine 299, and glutamate 306.

This sequence belongs to the IspG family. [4Fe-4S] cluster is required as a cofactor.

It carries out the reaction (2E)-4-hydroxy-3-methylbut-2-enyl diphosphate + oxidized [flavodoxin] + H2O + 2 H(+) = 2-C-methyl-D-erythritol 2,4-cyclic diphosphate + reduced [flavodoxin]. The protein operates within isoprenoid biosynthesis; isopentenyl diphosphate biosynthesis via DXP pathway; isopentenyl diphosphate from 1-deoxy-D-xylulose 5-phosphate: step 5/6. Its function is as follows. Converts 2C-methyl-D-erythritol 2,4-cyclodiphosphate (ME-2,4cPP) into 1-hydroxy-2-methyl-2-(E)-butenyl 4-diphosphate. The protein is 4-hydroxy-3-methylbut-2-en-1-yl diphosphate synthase (flavodoxin) of Campylobacter jejuni subsp. jejuni serotype O:2 (strain ATCC 700819 / NCTC 11168).